Reading from the N-terminus, the 149-residue chain is Calmodulin-like protein 3 (149 aa).

EF-hand domains lie at 8–43 (EQIAEFKEAFSLFDKDGDGCITTQELGTVMRSLGQN), 44–79 (PTEAELQDMVNEIDKDGNGTVDFPEFLTMMSRKMKD), 81–116 (DSEEEIREAFRVFDKDGNGFVSAAELRHVMTRLGEK), and 117–149 (LSDEEVDEMIQAADTDGDGQVNYEEFVHMLVSK). Ca(2+) is bound by residues aspartate 21, aspartate 23, aspartate 25, cysteine 27, glutamate 32, aspartate 57, aspartate 59, asparagine 61, threonine 63, glutamate 68, aspartate 94, aspartate 96, asparagine 98, glutamate 105, aspartate 130, aspartate 132, aspartate 134, glutamine 136, and glutamate 141.

It belongs to the calmodulin family. As to quaternary structure, interacts with MYO10, the interaction is calcium-dependent and essential for MYO10 function in filopodial extension.

May function as a specific light chain of unconventional myosin-10 (MYO10), also enhances MYO10 translation, possibly by acting as a chaperone for the emerging MYO10 heavy chain protein. May compete with calmodulin by binding, with different affinities, to cellular substrates. This Rattus norvegicus (Rat) protein is Calmodulin-like protein 3 (Calml3).